Consider the following 267-residue polypeptide: Acryloyl-CoA reductase electron transfer subunit gamma (267 aa).

As to quaternary structure, heterohexadecamer; tetramer of tetramers. Each tetramer is composed of 2 alpha (AcrC), a beta (AcrA) and a gamma (AcrB) subunit.

The protein localises to the cytoplasm. Functionally, part of the ETF-acryloyl-CoA reductase complex involved in the pathway of L-alanine fermentation. The electron transfer flavoprotein (ETF) serves as a specific electron acceptor for acryloyl-CoA reductase. In Anaerotignum propionicum (Clostridium propionicum), this protein is Acryloyl-CoA reductase electron transfer subunit gamma (acrB).